A 146-amino-acid chain; its full sequence is 3-hydroxyacyl-[acyl-carrier-protein] dehydratase FabZ (146 aa).

The active site involves His49.

The protein belongs to the thioester dehydratase family. FabZ subfamily.

It is found in the cytoplasm. The enzyme catalyses a (3R)-hydroxyacyl-[ACP] = a (2E)-enoyl-[ACP] + H2O. Involved in unsaturated fatty acids biosynthesis. Catalyzes the dehydration of short chain beta-hydroxyacyl-ACPs and long chain saturated and unsaturated beta-hydroxyacyl-ACPs. The sequence is that of 3-hydroxyacyl-[acyl-carrier-protein] dehydratase FabZ from Azotobacter vinelandii (strain DJ / ATCC BAA-1303).